The primary structure comprises 530 residues: Copine-D (530 aa).

C2 domains are found at residues 1–122 and 130–248; these read MNPI…RMKM and LSGS…EFEI. Ca(2+) is bound by residues Asp25, Asp31, Asp85, Asp87, and Asp100. Positions 289 to 507 constitute a VWFA domain; sequence NLMVAIDCTA…ALAHETLKEI (219 aa).

The protein belongs to the copine family. Ca(2+) serves as cofactor.

In Dictyostelium discoideum (Social amoeba), this protein is Copine-D (cpnD).